The primary structure comprises 226 residues: Probable transaldolase (226 aa).

Lys91 (schiff-base intermediate with substrate) is an active-site residue.

This sequence belongs to the transaldolase family. Type 3B subfamily.

The protein localises to the cytoplasm. The catalysed reaction is D-sedoheptulose 7-phosphate + D-glyceraldehyde 3-phosphate = D-erythrose 4-phosphate + beta-D-fructose 6-phosphate. It functions in the pathway carbohydrate degradation; pentose phosphate pathway; D-glyceraldehyde 3-phosphate and beta-D-fructose 6-phosphate from D-ribose 5-phosphate and D-xylulose 5-phosphate (non-oxidative stage): step 2/3. Transaldolase is important for the balance of metabolites in the pentose-phosphate pathway. This is Probable transaldolase from Chlorobium phaeobacteroides (strain DSM 266 / SMG 266 / 2430).